The primary structure comprises 172 residues: Carotene biosynthesis-related protein CBR, chloroplastic (172 aa).

Residues 41 to 66 are disordered; sequence AENNPSTPPPSSPSPPPPPPTPAAPT. Pro residues predominate over residues 46-63; it reads STPPPSSPSPPPPPPTPA. The next 2 helical transmembrane spans lie at 111-131 and 152-172; these read PTLIALTFVLFSAASLIPAFA and FAMIGFAAMLVYEGIQGIALF.

Belongs to the ELIP/psbS family.

It localises to the plastid. The protein resides in the chloroplast membrane. In terms of biological role, putative zeaxanthin binding protein. That forms photoprotective complexes within the light-harvesting antennae. This is Carotene biosynthesis-related protein CBR, chloroplastic (CBR) from Dunaliella salina (Green alga).